A 313-amino-acid polypeptide reads, in one-letter code: Acetaldehyde dehydrogenase 3 (313 aa).

An NAD(+)-binding site is contributed by 13–16 (SGNI). The active-site Acyl-thioester intermediate is the cysteine 133. NAD(+) contacts are provided by residues 164 to 172 (SAGPGTRAN) and asparagine 291.

It belongs to the acetaldehyde dehydrogenase family.

It catalyses the reaction acetaldehyde + NAD(+) + CoA = acetyl-CoA + NADH + H(+). This is Acetaldehyde dehydrogenase 3 from Paraburkholderia xenovorans (strain LB400).